Here is a 161-residue protein sequence, read N- to C-terminus: Putative HTH-type transcriptional regulator MT1325 (161 aa).

The HTH rrf2-type domain maps to 2 to 132 (RMSAKAEYAV…EETTLADVAG (131 aa)).

This is Putative HTH-type transcriptional regulator MT1325 from Mycobacterium tuberculosis (strain CDC 1551 / Oshkosh).